A 341-amino-acid chain; its full sequence is L-threonine 3-dehydrogenase (341 aa).

Cys38 lines the Zn(2+) pocket. Residues Thr40 and His43 each act as charge relay system in the active site. Residues His63, Glu64, Cys93, Cys96, Cys99, and Cys107 each contribute to the Zn(2+) site. Residues Ile175, Asp195, Arg200, 262 to 264 (LGI), and 286 to 287 (IY) contribute to the NAD(+) site.

It belongs to the zinc-containing alcohol dehydrogenase family. As to quaternary structure, homotetramer. It depends on Zn(2+) as a cofactor.

The protein localises to the cytoplasm. It catalyses the reaction L-threonine + NAD(+) = (2S)-2-amino-3-oxobutanoate + NADH + H(+). Its pathway is amino-acid degradation; L-threonine degradation via oxydo-reductase pathway; glycine from L-threonine: step 1/2. Functionally, catalyzes the NAD(+)-dependent oxidation of L-threonine to 2-amino-3-ketobutyrate. This is L-threonine 3-dehydrogenase from Klebsiella pneumoniae subsp. pneumoniae (strain ATCC 700721 / MGH 78578).